The chain runs to 49 residues: Omega-segestritoxin-Sf1a (49 aa).

4 disulfides stabilise this stretch: C3–C22, C10–C27, C21–C48, and C29–C46.

As to expression, expressed by the venom gland.

Its subcellular location is the secreted. In terms of biological role, potent and selective blocker of N-type voltage-gated calcium channels (Cav2.2/CACNA1B). Also blocks vertebrate Cav2.1/CACNA1A (P/Q-type) and Cav1.2/CACNA1C (L-type) channels at very high concentration (2 micromolar). The sequence is that of Omega-segestritoxin-Sf1a from Segestria florentina (Tube-web spider).